We begin with the raw amino-acid sequence, 222 residues long: uncharacterized protein (222 aa).

Gly-2 is lipidated: N-myristoyl glycine; by host.

This sequence belongs to the mimivirus R683/R861 family.

This is an uncharacterized protein from Acanthamoeba polyphaga mimivirus (APMV).